The following is a 799-amino-acid chain: Heat shock protein 90-6, mitochondrial (799 aa).

A mitochondrion-targeting transit peptide spans 1–48 (MIRLSKRSVSTLLRSGNQSFRIAAAASTSRSSPSATDVKRSDTESRWY). Over residues 23 to 35 (AAAASTSRSSPSA) the composition is skewed to low complexity. The tract at residues 23–61 (AAAASTSRSSPSATDVKRSDTESRWYSSLTNGQSKNSGS) is disordered. The segment covering 46 to 61 (RWYSSLTNGQSKNSGS) has biased composition (polar residues). ATP contacts are provided by residues glutamate 124, asparagine 128, aspartate 170, methionine 175, 190-191 (SG), 214-219 (QFGVGF), and threonine 269. A disordered region spans residues 314 to 337 (EVEVEDDPTETKKDDQDDQTEKKK). Residues 322–334 (TETKKDDQDDQTE) are compositionally biased toward basic and acidic residues. Arginine 464 lines the ATP pocket. A compositionally biased stretch (polar residues) spans 766–777 (SPEVQPQQQQMA). A disordered region spans residues 766-799 (SPEVQPQQQQMAHSHDAETFEAEVVEPVEVDGKK). Residues 784–799 (TFEAEVVEPVEVDGKK) are compositionally biased toward acidic residues.

It belongs to the heat shock protein 90 family. In terms of assembly, interacts with P23-1.

The protein resides in the mitochondrion. Molecular chaperone which stabilizes unfolding protein intermediates and functions as a folding molecular chaperone that assists the non-covalent folding of proteins in an ATP-dependent manner. This chain is Heat shock protein 90-6, mitochondrial, found in Arabidopsis thaliana (Mouse-ear cress).